The following is a 170-amino-acid chain: Heat shock protein beta-7 (170 aa).

A disordered region spans residues 1–39 (MSHRTSSTFRAERSFHSSSSSSSSSTSSSASRALPAQDP). Positions 1–71 (MSHRTSSTFR…PLAFPARPGG (71 aa)) are required for localization to SC35 splicing speckles. Over residues 16–31 (HSSSSSSSSSTSSSAS) the composition is skewed to low complexity. Residues 62-170 (PLAFPARPGG…QQTFRTEIKI (109 aa)) enclose the sHSP domain.

The protein belongs to the small heat shock protein (HSP20) family. In terms of assembly, interacts with C-terminal domain of actin-binding protein 280. In terms of tissue distribution, isoform 1 is highly expressed in adult and fetal heart, skeletal muscle, and at a much lower levels in adipose tissue and in aorta. Undetectable in other tissues. Isoform 2 and isoform 3 are poorly detected in heart.

The protein resides in the cytoplasm. It is found in the nucleus. The protein localises to the cajal body. In Homo sapiens (Human), this protein is Heat shock protein beta-7 (HSPB7).